Consider the following 248-residue polypeptide: DNA repair protein RecO (248 aa).

This sequence belongs to the RecO family.

In terms of biological role, involved in DNA repair and RecF pathway recombination. The protein is DNA repair protein RecO of Oleidesulfovibrio alaskensis (strain ATCC BAA-1058 / DSM 17464 / G20) (Desulfovibrio alaskensis).